Consider the following 100-residue polypeptide: Urease subunit gamma (100 aa).

This sequence belongs to the urease gamma subunit family. In terms of assembly, heterotrimer of UreA (gamma), UreB (beta) and UreC (alpha) subunits. Three heterotrimers associate to form the active enzyme.

The protein localises to the cytoplasm. The catalysed reaction is urea + 2 H2O + H(+) = hydrogencarbonate + 2 NH4(+). Its pathway is nitrogen metabolism; urea degradation; CO(2) and NH(3) from urea (urease route): step 1/1. In Bordetella pertussis (strain Tohama I / ATCC BAA-589 / NCTC 13251), this protein is Urease subunit gamma.